We begin with the raw amino-acid sequence, 451 residues long: FAD-dependent monooxygenase adrH (451 aa).

Positions 39, 53, and 112 each coordinate FAD. Residue tyrosine 196 is part of the active site. Aspartate 288 and alanine 301 together coordinate FAD. An N-linked (GlcNAc...) asparagine glycan is attached at asparagine 385. Residues 426–446 (TLLWVSSLALFLFFPWLGSYL) form a helical membrane-spanning segment.

The protein belongs to the paxM FAD-dependent monooxygenase family. FAD serves as cofactor.

It is found in the membrane. The protein operates within secondary metabolite biosynthesis; terpenoid biosynthesis. FAD-dependent monooxygenase; part of the gene cluster that mediates the biosynthesis of andrastins, meroterpenoid compounds that exhibit inhibitory activity against ras farnesyltransferase, suggesting that they could be promising leads for antitumor agents. The first step of the pathway is the synthesis of 3,5-dimethylorsellinic acid (DMOA) by the polyketide synthase adrD via condensation of one acetyl-CoA starter unit with 3 malonyl-CoA units and 2 methylations. DMAO is then converted to farnesyl-DMAO by the prenyltransferase adrG. The methyltransferase adrK catalyzes the methylation of the carboxyl group of farnesyl-DMAO to farnesyl-DMAO methyl ester which is further converted to epoxyfarnesyl-DMAO methyl ester by the FAD-dependent monooxygenase adrH. The terpene cyclase adrI then catalyzes the carbon skeletal rearrangement to generate the andrastin E, the first compound in the pathway having the andrastin scaffold, with the tetracyclic ring system. The post-cyclization tailoring enzymes adrF, adrE, adrJ, and adrA, are involved in the conversion of andrastin E into andrastin A. The short chain dehydrogenase adrF is responsible for the oxidation of the C-3 a hydroxyl group of andrastin E to yield the corresponding ketone, andrastin D. The ketoreductase adrE stereoselectively reduces the carbonyl moiety to reverse the stereochemistry of the C-3 position to yield andrastin F. The acetyltransferase adrJ is the acetyltransferase that attaches the acetyl group to the C-3 hydroxyl group of andrastin F to yield andrastin C. Finally, the cytochrome P450 monooxygenase adrA catalyzes two sequential oxidation reactions of the C-23 methyl group, to generate the corresponding alcohol andrastin B, and aldehyde andrastin A. The polypeptide is FAD-dependent monooxygenase adrH (Penicillium rubens (strain ATCC 28089 / DSM 1075 / NRRL 1951 / Wisconsin 54-1255) (Penicillium chrysogenum)).